The primary structure comprises 296 residues: Ribosomal RNA small subunit methyltransferase A (296 aa).

Residues asparagine 30, leucine 32, glycine 57, glutamate 78, aspartate 103, and asparagine 128 each coordinate S-adenosyl-L-methionine.

It belongs to the class I-like SAM-binding methyltransferase superfamily. rRNA adenine N(6)-methyltransferase family. RsmA subfamily.

It localises to the cytoplasm. It catalyses the reaction adenosine(1518)/adenosine(1519) in 16S rRNA + 4 S-adenosyl-L-methionine = N(6)-dimethyladenosine(1518)/N(6)-dimethyladenosine(1519) in 16S rRNA + 4 S-adenosyl-L-homocysteine + 4 H(+). Its function is as follows. Specifically dimethylates two adjacent adenosines (A1518 and A1519) in the loop of a conserved hairpin near the 3'-end of 16S rRNA in the 30S particle. May play a critical role in biogenesis of 30S subunits. The chain is Ribosomal RNA small subunit methyltransferase A from Staphylococcus carnosus (strain TM300).